We begin with the raw amino-acid sequence, 557 residues long: DNA ligase (557 aa).

Glutamate 249 contacts ATP. Lysine 251 (N6-AMP-lysine intermediate) is an active-site residue. Arginine 256, arginine 271, glutamate 301, phenylalanine 340, arginine 417, and lysine 423 together coordinate ATP.

This sequence belongs to the ATP-dependent DNA ligase family. Requires Mg(2+) as cofactor.

It catalyses the reaction ATP + (deoxyribonucleotide)n-3'-hydroxyl + 5'-phospho-(deoxyribonucleotide)m = (deoxyribonucleotide)n+m + AMP + diphosphate.. Functionally, DNA ligase that seals nicks in double-stranded DNA during DNA replication, DNA recombination and DNA repair. This is DNA ligase from Methanothermobacter thermautotrophicus (Methanobacterium thermoformicicum).